A 203-amino-acid chain; its full sequence is Early nodulin-like protein 9 (203 aa).

The signal sequence occupies residues 1 to 27 (MARNLKSMMLCGFGLLCFLMIVDRAYA). A Phytocyanin domain is found at 28–130 (REFTVGGATG…NEKLVVIVMA (103 aa)). An intrachain disulfide couples Cys84 to Cys118. Asn103 carries N-linked (GlcNAc...) asparagine glycosylation. Residues 134-181 (GNKNTASSPPSPAPAPSGESAPSPPVSGTFEMTPAPTPTTSEDTPNSA) form a disordered region. Ser180 carries GPI-anchor amidated serine lipidation. Positions 181-203 (AASSLSFVAALLGAALASTLFLH) are cleaved as a propeptide — removed in mature form.

The protein belongs to the early nodulin-like (ENODL) family. In terms of tissue distribution, specifically observed at the plasma membrane of sieve elements in vascular tissues of leaves, stems, roots, flowers and reproductive organs. Absent from companion cells.

It localises to the cell membrane. May act as a carbohydrate transporter. Mainly required for reproductive functions. The chain is Early nodulin-like protein 9 from Arabidopsis thaliana (Mouse-ear cress).